Consider the following 831-residue polypeptide: MTEDFPKILPLLVEEDTFLYPFMIAPIFLQNNASIKAVAYAKNNKSLVFIACQKDKLNDNEAPYYDVGVIGSVMREANMPNGRVKLLFNGIAKGRILEPAKENEQGFLEAQISPIEYLEYDKENIQAIVEVLKEKVITLANVSSLFPPDLIKALEDNDDPNRIADLIAAALHLKKDQAYFLFANNNTEQRLLDLIDIVIEETKTQKLQKEIKSKVHQKMEQTNKEYFLKEQLKQIQKELGTDKQRDEDLNQYYQKLESIKPFLKEEAFKEIKKQIDRLSRTHADSSDSATLQNYVETMLDVPFGQYEKKALDIKHVKEQLDNDHYSLKRPKERIVEYFATMQLLEMRHKKKPEKKDKTKGTILCFYGPPGVGKTSLANSIAKAIERPLVRIALGGLEDVNELRGHRRTYIGSMPGRIVQGLIEAKKMNPVMVLDEIDKVDRSVRGDPASALLEILDPEQNIAFRDHYANFSIDLSQVIFIATANNIDRIPAPLRDRMEFISVSSYTPSEKEEIAKNYLIPQELEKHALKPSEVDISHECLKLIIEKYTREAGVRDLRRQIATIMRKAALKYLEDNPHKKGRTKKSEDKDKKGGNEENEKRGESKDFCVSITPDNLKEYLERMVFEIDPIDEENKIGIVNGLAWTPVGGDVLKIEAVKIRGKGELKLTGSLGDVMKESAIIAFSVVKVLLDNETLKVPKIPSETDAENKKKKKVLKVYNAYDLHLHVPEGATPKDGPSAGIAMASVMASILCDRAIRSEVAMTGELTLSGEVLPIGGLKEKLIAAFKAGIKTALIPVKNYERDLDEIPTEVRENLNIVAVKNIAEVLEKTLL.

The Lon N-terminal domain maps to 9-202; the sequence is LPLLVEEDTF…DLIDIVIEET (194 aa). 367-374 is an ATP binding site; the sequence is GPPGVGKT. The disordered stretch occupies residues 574-605; sequence DNPHKKGRTKKSEDKDKKGGNEENEKRGESKD. A Lon proteolytic domain is found at 632-831; that stretch reads ENKIGIVNGL…IAEVLEKTLL (200 aa). Catalysis depends on residues serine 737 and lysine 780.

The protein belongs to the peptidase S16 family. In terms of assembly, homohexamer. Organized in a ring with a central cavity.

The protein resides in the cytoplasm. It carries out the reaction Hydrolysis of proteins in presence of ATP.. Functionally, ATP-dependent serine protease that mediates the selective degradation of mutant and abnormal proteins as well as certain short-lived regulatory proteins. Required for cellular homeostasis and for survival from DNA damage and developmental changes induced by stress. Degrades polypeptides processively to yield small peptide fragments that are 5 to 10 amino acids long. Binds to DNA in a double-stranded, site-specific manner. The polypeptide is Lon protease (Helicobacter pylori (strain J99 / ATCC 700824) (Campylobacter pylori J99)).